We begin with the raw amino-acid sequence, 434 residues long: Glutamyl-tRNA reductase (434 aa).

Substrate is bound by residues T49 to R52, S109, E114 to Q116, and Q120. The Nucleophile role is filled by C50. G189–C194 lines the NADP(+) pocket.

Belongs to the glutamyl-tRNA reductase family. Homodimer.

The enzyme catalyses (S)-4-amino-5-oxopentanoate + tRNA(Glu) + NADP(+) = L-glutamyl-tRNA(Glu) + NADPH + H(+). The protein operates within porphyrin-containing compound metabolism; protoporphyrin-IX biosynthesis; 5-aminolevulinate from L-glutamyl-tRNA(Glu): step 1/2. Its function is as follows. Catalyzes the NADPH-dependent reduction of glutamyl-tRNA(Glu) to glutamate 1-semialdehyde (GSA). In Geobacter metallireducens (strain ATCC 53774 / DSM 7210 / GS-15), this protein is Glutamyl-tRNA reductase.